The sequence spans 115 residues: MAFKVGCDNFSSSNFSTQVVCSPSGAALFCFEVLFSSTTGSSVDSESLERLFDGVAILLLLILLSLSNYYSIQLSNSYVLKYRVYTIKSHLIAKANIEKKKKKKKKKQIKNFQFG.

Helical transmembrane passes span 15-35 (FSTQVVCSPSGAALFCFEVLF) and 52-72 (FDGVAILLLLILLSLSNYYSI).

The protein resides in the membrane. This is an uncharacterized protein from Saccharomyces cerevisiae (strain ATCC 204508 / S288c) (Baker's yeast).